Reading from the N-terminus, the 275-residue chain is Large ribosomal subunit protein uL2 (275 aa).

Residues Arg212 to Arg259 form a disordered region.

The protein belongs to the universal ribosomal protein uL2 family. In terms of assembly, part of the 50S ribosomal subunit. Forms a bridge to the 30S subunit in the 70S ribosome.

Functionally, one of the primary rRNA binding proteins. Required for association of the 30S and 50S subunits to form the 70S ribosome, for tRNA binding and peptide bond formation. It has been suggested to have peptidyltransferase activity; this is somewhat controversial. Makes several contacts with the 16S rRNA in the 70S ribosome. This is Large ribosomal subunit protein uL2 from Acidobacterium capsulatum (strain ATCC 51196 / DSM 11244 / BCRC 80197 / JCM 7670 / NBRC 15755 / NCIMB 13165 / 161).